Consider the following 524-residue polypeptide: Probable 1,3-beta-glucanosyltransferase GAS3 (524 aa).

A signal peptide spans 1–21 (MQLSKSILLAALAATPSLVNA). Residues C78 and C107 are joined by a disulfide bond. Positions 96, 168, and 169 each coordinate (1,3-beta-D-glucosyl)n. Residue E169 is the Proton donor of the active site. N201 is a glycosylation site (N-linked (GlcNAc...) asparagine). (1,3-beta-D-glucosyl)n-binding residues include D212 and R217. Intrachain disulfides connect C226–C369 and C254–C286. An N-linked (GlcNAc...) asparagine glycan is attached at N269. E283 functions as the Nucleophile in the catalytic mechanism. Residue Y315 participates in (1,3-beta-D-glucosyl)n binding. N-linked (GlcNAc...) asparagine glycans are attached at residues N350, N385, N404, and N422. The interval 461–498 (TSQSSSRSLTSSTSPSSSTGSSSSTGSSSASSSSKSKG) is disordered. G498 carries the GPI-anchor amidated glycine lipid modification. The propeptide at 499–524 (VGNIVNVSFSQSGYLALFAGLISALL) is removed in mature form.

The protein belongs to the glycosyl hydrolase 72 family. The GPI-anchor is attached to the protein in the endoplasmic reticulum and serves to target the protein to the cell surface. There, the glucosamine-inositol phospholipid moiety is cleaved off and the GPI-modified mannoprotein is covalently attached via its lipidless GPI glycan remnant to the 1,6-beta-glucan of the outer cell wall layer. In terms of processing, N-glycosylated.

It is found in the secreted. The protein localises to the cell wall. Its subcellular location is the membrane. Functionally, splits internally a 1,3-beta-glucan molecule and transfers the newly generated reducing end (the donor) to the non-reducing end of another 1,3-beta-glucan molecule (the acceptor) forming a 1,3-beta linkage, resulting in the elongation of 1,3-beta-glucan chains in the cell wall. Involved in cell wall biosynthesis and morphogenesis. The chain is Probable 1,3-beta-glucanosyltransferase GAS3 (GAS3) from Saccharomyces cerevisiae (strain ATCC 204508 / S288c) (Baker's yeast).